The following is a 38-amino-acid chain: Bacteriocin curvaticin FS47 (38 aa).

It is found in the secreted. Bacteriocin active against Listeria monocytogenes, Pediococcus, Enterococcus, Lactobacilli and Bacilli. The protein is Bacteriocin curvaticin FS47 of Latilactobacillus curvatus (Lactobacillus curvatus).